Consider the following 293-residue polypeptide: tRNA pseudouridine synthase B (293 aa).

Asp38 serves as the catalytic Nucleophile.

The protein belongs to the pseudouridine synthase TruB family. Type 1 subfamily.

The catalysed reaction is uridine(55) in tRNA = pseudouridine(55) in tRNA. Responsible for synthesis of pseudouridine from uracil-55 in the psi GC loop of transfer RNAs. This Solibacter usitatus (strain Ellin6076) protein is tRNA pseudouridine synthase B.